Consider the following 559-residue polypeptide: Formate--tetrahydrofolate ligase (559 aa).

ATP is bound at residue 68–75; that stretch reads TPAGEGKS.

It belongs to the formate--tetrahydrofolate ligase family.

It carries out the reaction (6S)-5,6,7,8-tetrahydrofolate + formate + ATP = (6R)-10-formyltetrahydrofolate + ADP + phosphate. It functions in the pathway one-carbon metabolism; tetrahydrofolate interconversion. The protein is Formate--tetrahydrofolate ligase of Clostridium tetani (strain Massachusetts / E88).